We begin with the raw amino-acid sequence, 400 residues long: Subtilisin-like protease 7 (400 aa).

Positions 1–20 (MGFITKAIPLALAAASVING) are cleaved as a signal peptide. The propeptide occupies 21–119 (AEILETRAGV…IERDARVQIN (99 aa)). The Inhibitor I9 domain maps to 36-118 (KYIVVMNDGI…YIERDARVQI (83 aa)). The Peptidase S8 domain occupies 129 to 400 (SWGLARVGSK…SKLINNGSGM (272 aa)). Active-site charge relay system residues include D161 and H192. N-linked (GlcNAc...) asparagine glycosylation is found at N222 and N252. Catalysis depends on S346, which acts as the Charge relay system. N-linked (GlcNAc...) asparagine glycosylation occurs at N396.

Belongs to the peptidase S8 family.

The protein localises to the secreted. Functionally, secreted subtilisin-like serine protease with keratinolytic activity that contributes to pathogenicity. The polypeptide is Subtilisin-like protease 7 (SUB7) (Trichophyton soudanense).